The primary structure comprises 304 residues: NAD kinase (304 aa).

The active-site Proton acceptor is the Asp77. NAD(+)-binding positions include 77–78, Arg82, 151–152, Arg162, Asp181, and 192–197; these read DG, NE, and TAYSFS.

Belongs to the NAD kinase family. Requires a divalent metal cation as cofactor.

It localises to the cytoplasm. The enzyme catalyses NAD(+) + ATP = ADP + NADP(+) + H(+). Involved in the regulation of the intracellular balance of NAD and NADP, and is a key enzyme in the biosynthesis of NADP. Catalyzes specifically the phosphorylation on 2'-hydroxyl of the adenosine moiety of NAD to yield NADP. This Leifsonia xyli subsp. xyli (strain CTCB07) protein is NAD kinase.